A 215-amino-acid polypeptide reads, in one-letter code: Protein-L-isoaspartate O-methyltransferase 1 (215 aa).

The active site involves S61.

It belongs to the methyltransferase superfamily. L-isoaspartyl/D-aspartyl protein methyltransferase family.

It localises to the cytoplasm. The catalysed reaction is [protein]-L-isoaspartate + S-adenosyl-L-methionine = [protein]-L-isoaspartate alpha-methyl ester + S-adenosyl-L-homocysteine. Functionally, catalyzes the methyl esterification of L-isoaspartyl residues in peptides and proteins that result from spontaneous decomposition of normal L-aspartyl and L-asparaginyl residues. It plays a role in the repair and/or degradation of damaged proteins. This chain is Protein-L-isoaspartate O-methyltransferase 1, found in Pelobacter propionicus (strain DSM 2379 / NBRC 103807 / OttBd1).